We begin with the raw amino-acid sequence, 215 residues long: Protein-L-isoaspartate O-methyltransferase (215 aa).

Ser-62 is an active-site residue.

This sequence belongs to the methyltransferase superfamily. L-isoaspartyl/D-aspartyl protein methyltransferase family.

Its subcellular location is the cytoplasm. The catalysed reaction is [protein]-L-isoaspartate + S-adenosyl-L-methionine = [protein]-L-isoaspartate alpha-methyl ester + S-adenosyl-L-homocysteine. Its function is as follows. Catalyzes the methyl esterification of L-isoaspartyl residues in peptides and proteins that result from spontaneous decomposition of normal L-aspartyl and L-asparaginyl residues. It plays a role in the repair and/or degradation of damaged proteins. The polypeptide is Protein-L-isoaspartate O-methyltransferase (Rhodopseudomonas palustris (strain BisA53)).